A 691-amino-acid chain; its full sequence is Elongation factor G (691 aa).

In terms of domain architecture, tr-type G spans 8 to 282 (ERVRNIGIAA…AVIDYLPAPV (275 aa)). Residues 17-24 (AHIDAGKT), 81-85 (DTPGH), and 135-138 (NKMD) contribute to the GTP site.

This sequence belongs to the TRAFAC class translation factor GTPase superfamily. Classic translation factor GTPase family. EF-G/EF-2 subfamily.

The protein resides in the cytoplasm. Catalyzes the GTP-dependent ribosomal translocation step during translation elongation. During this step, the ribosome changes from the pre-translocational (PRE) to the post-translocational (POST) state as the newly formed A-site-bound peptidyl-tRNA and P-site-bound deacylated tRNA move to the P and E sites, respectively. Catalyzes the coordinated movement of the two tRNA molecules, the mRNA and conformational changes in the ribosome. The chain is Elongation factor G from Synechococcus sp. (strain CC9605).